The sequence spans 253 residues: Anamorsin homolog (253 aa).

The segment at 4–129 (FKGLQKSLYI…ETGSSARLSF (126 aa)) is N-terminal SAM-like domain. Residues 130–161 (AKKNSSTLNVWKISGDDDELIDEEDLLDEVDK) form a linker region. The [2Fe-2S] cluster site is built by cysteine 172, cysteine 181, cysteine 184, and cysteine 186. The tract at residues 172 to 186 (CSTTGKRKACKNCSC) is fe-S binding site A. Residues cysteine 214, cysteine 217, cysteine 225, and cysteine 228 each contribute to the [4Fe-4S] cluster site. 2 consecutive short sequence motifs (cx2C motif) follow at residues 214–217 (CGNC) and 225–228 (CSSC). The interval 214-228 (CGNCYLGDAFRCSSC) is fe-S binding site B.

This sequence belongs to the anamorsin family. In terms of assembly, monomer. It depends on [2Fe-2S] cluster as a cofactor. [4Fe-4S] cluster serves as cofactor.

Its subcellular location is the cytoplasm. The protein resides in the mitochondrion intermembrane space. Functionally, component of the cytosolic iron-sulfur (Fe-S) protein assembly (CIA) machinery. Required for the maturation of extramitochondrial Fe-S proteins. Part of an electron transfer chain functioning in an early step of cytosolic Fe-S biogenesis, facilitating the de novo assembly of a [4Fe-4S] cluster on the cytosolic Fe-S scaffold complex. Electrons are transferred from NADPH via a FAD- and FMN-containing diflavin oxidoreductase. Together with the diflavin oxidoreductase, also required for the assembly of the diferric tyrosyl radical cofactor of ribonucleotide reductase (RNR), probably by providing electrons for reduction during radical cofactor maturation in the catalytic small subunit. The protein is Anamorsin homolog of Drosophila willistoni (Fruit fly).